The following is a 932-amino-acid chain: Ribosome biogenesis protein ERB1 (932 aa).

A compositionally biased stretch (low complexity) spans methionine 1 to glycine 18. Residues methionine 1–leucine 229 are disordered. A compositionally biased stretch (polar residues) spans proline 27–alanine 36. 2 stretches are compositionally biased toward acidic residues: residues valine 57–serine 119 and aspartate 150–glutamate 172. Low complexity predominate over residues serine 175–serine 184. WD repeat units lie at residues proline 555–serine 594 and alanine 604–lysine 644. The interval serine 679–alanine 698 is disordered. 4 WD repeats span residues serine 762–threonine 800, serine 803–lysine 842, tyrosine 846–glutamate 885, and lysine 901–threonine 932.

The protein belongs to the WD repeat BOP1/ERB1 family. Component of the NOP7 complex, composed of ERB1, NOP7 and YTM1. The complex is held together by ERB1, which interacts with NOP7 via its N-terminal domain and with YTM1 via a high-affinity interaction between the seven-bladed beta-propeller domains of the 2 proteins. The NOP7 complex associates with the 66S pre-ribosome.

It is found in the nucleus. The protein resides in the nucleolus. The protein localises to the nucleoplasm. Functionally, component of the NOP7 complex, which is required for maturation of the 25S and 5.8S ribosomal RNAs and formation of the 60S ribosome. This chain is Ribosome biogenesis protein ERB1, found in Mycosarcoma maydis (Corn smut fungus).